Here is a 316-residue protein sequence, read N- to C-terminus: Coproporphyrin III ferrochelatase (316 aa).

Fe-coproporphyrin III-binding positions include tyrosine 13, arginine 30, 46 to 47 (RY), serine 54, and tyrosine 125. Fe(2+)-binding residues include histidine 183 and glutamate 264.

The protein belongs to the ferrochelatase family.

The protein resides in the cytoplasm. The enzyme catalyses Fe-coproporphyrin III + 2 H(+) = coproporphyrin III + Fe(2+). Its pathway is porphyrin-containing compound metabolism; protoheme biosynthesis. Its function is as follows. Involved in coproporphyrin-dependent heme b biosynthesis. Catalyzes the insertion of ferrous iron into coproporphyrin III to form Fe-coproporphyrin III. The polypeptide is Coproporphyrin III ferrochelatase (Geobacillus thermodenitrificans (strain NG80-2)).